The chain runs to 300 residues: Glycine--tRNA ligase alpha subunit (300 aa).

The protein belongs to the class-II aminoacyl-tRNA synthetase family. Tetramer of two alpha and two beta subunits.

It is found in the cytoplasm. The enzyme catalyses tRNA(Gly) + glycine + ATP = glycyl-tRNA(Gly) + AMP + diphosphate. This Prochlorococcus marinus (strain MIT 9313) protein is Glycine--tRNA ligase alpha subunit.